The following is a 230-amino-acid chain: Putative N-acetylmannosamine-6-phosphate 2-epimerase (230 aa).

Belongs to the NanE family.

The catalysed reaction is an N-acyl-D-glucosamine 6-phosphate = an N-acyl-D-mannosamine 6-phosphate. The protein operates within amino-sugar metabolism; N-acetylneuraminate degradation; D-fructose 6-phosphate from N-acetylneuraminate: step 3/5. Converts N-acetylmannosamine-6-phosphate (ManNAc-6-P) to N-acetylglucosamine-6-phosphate (GlcNAc-6-P). The sequence is that of Putative N-acetylmannosamine-6-phosphate 2-epimerase from Malacoplasma penetrans (strain HF-2) (Mycoplasma penetrans).